We begin with the raw amino-acid sequence, 731 residues long: T-cell activation Rho GTPase-activating protein (731 aa).

Residues glutamine 88–phenylalanine 277 enclose the Rho-GAP domain. Disordered stretches follow at residues threonine 288–proline 421, serine 464–histidine 507, and histidine 641–proline 662. The segment covering serine 299–aspartate 311 has biased composition (polar residues). The segment covering serine 319–serine 329 has biased composition (low complexity). Over residues serine 380–lysine 399 the composition is skewed to polar residues. Serine 400 is modified (phosphoserine). Low complexity predominate over residues serine 464–proline 480. 2 stretches are compositionally biased toward basic and acidic residues: residues lysine 494–glutamate 503 and histidine 641–lysine 652.

May function as a GTPase-activating protein and may play important roles during T-cell activation. This chain is T-cell activation Rho GTPase-activating protein (TAGAP), found in Homo sapiens (Human).